Here is a 542-residue protein sequence, read N- to C-terminus: TNF receptor-associated factor 6 (542 aa).

The segment at 32–54 (ESFLSPTENPSTISVSSSMPPDQ) is disordered. The span at 35–52 (LSPTENPSTISVSSSMPP) shows a compositional bias: polar residues. The RING-type; degenerate zinc finger occupies 71 to 110 (CPICLMGLRSAVQTPCGHRFCDSCIRKSIRDTGQKCPVDN). 2 TRAF-type zinc fingers span residues 151 to 203 (KHLS…AVKQ) and 204 to 260 (NHEQ…NELA). A coiled-coil region spans residues 311–373 (QCKQELLNLR…STRELEAQQY (63 aa)). The 147-residue stretch at 374–520 (QGIYVWRVEN…EDVLLVRCEV (147 aa)) folds into the MATH domain. 489-496 (PKGFGYVT) serves as a coordination point for substrate.

This sequence belongs to the TNF receptor-associated factor family. A subfamily. In terms of assembly, homotrimer. Homooligomer.

It is found in the cytoplasm. It localises to the cell cortex. The protein localises to the nucleus. Its subcellular location is the lipid droplet. The enzyme catalyses S-ubiquitinyl-[E2 ubiquitin-conjugating enzyme]-L-cysteine + [acceptor protein]-L-lysine = [E2 ubiquitin-conjugating enzyme]-L-cysteine + N(6)-ubiquitinyl-[acceptor protein]-L-lysine.. It participates in protein modification; protein ubiquitination. E3 ubiquitin ligase that, together with UBE2N and UBE2V1, mediates the synthesis of 'Lys-63'-linked-polyubiquitin chains conjugated to proteins, such as IKBKG, IRAK1, AKT1 and AKT2. Also mediates ubiquitination of free/unanchored polyubiquitin chain that leads to MAP3K7 activation. In Danio rerio (Zebrafish), this protein is TNF receptor-associated factor 6 (traf6).